A 102-amino-acid polypeptide reads, in one-letter code: Large ribosomal subunit protein bL21 (102 aa).

It belongs to the bacterial ribosomal protein bL21 family. Part of the 50S ribosomal subunit. Contacts protein L20.

Functionally, this protein binds to 23S rRNA in the presence of protein L20. This chain is Large ribosomal subunit protein bL21, found in Pediococcus pentosaceus (strain ATCC 25745 / CCUG 21536 / LMG 10740 / 183-1w).